A 239-amino-acid chain; its full sequence is 7-cyano-7-deazaguanine synthase (239 aa).

8-18 (FSGGLDSTACL) contacts ATP. Residues cysteine 194, cysteine 209, cysteine 212, and cysteine 215 each contribute to the Zn(2+) site.

This sequence belongs to the QueC family. The cofactor is Zn(2+).

The catalysed reaction is 7-carboxy-7-deazaguanine + NH4(+) + ATP = 7-cyano-7-deazaguanine + ADP + phosphate + H2O + H(+). Its pathway is purine metabolism; 7-cyano-7-deazaguanine biosynthesis. Functionally, catalyzes the ATP-dependent conversion of 7-carboxy-7-deazaguanine (CDG) to 7-cyano-7-deazaguanine (preQ(0)). This Pyrococcus horikoshii (strain ATCC 700860 / DSM 12428 / JCM 9974 / NBRC 100139 / OT-3) protein is 7-cyano-7-deazaguanine synthase.